Here is a 624-residue protein sequence, read N- to C-terminus: Chaperone protein HtpG (624 aa).

Residues 1-336 form an a; substrate-binding region; sequence MKGQETRGFQ…SNDLPLNVSR (336 aa). The b stretch occupies residues 337 to 552; it reads EILQDSSVTR…ADEMSTQMAK (216 aa). Positions 553-624 are c; the sequence is LFAAAGQAAP…IRRMNQLLAS (72 aa).

It belongs to the heat shock protein 90 family. Homodimer.

It is found in the cytoplasm. In terms of biological role, molecular chaperone. Has ATPase activity. This is Chaperone protein HtpG from Klebsiella pneumoniae subsp. pneumoniae (strain ATCC 700721 / MGH 78578).